Here is a 793-residue protein sequence, read N- to C-terminus: Methionine--tRNA ligase (793 aa).

The short motif at 11-21 is the 'HIGH' region element; that stretch reads PYVNNFPHLGN. Cysteine 142, cysteine 145, cysteine 155, and cysteine 158 together coordinate Zn(2+). Positions 334 to 338 match the 'KMSKS' region motif; sequence KFSKS. Position 337 (lysine 337) interacts with ATP. Over residues 581–590 the composition is skewed to basic and acidic residues; the sequence is SQKDRKKSEK. The disordered stretch occupies residues 581 to 610; it reads SQKDRKKSEKGCSACKDSGSSKSDAAASSA. Residues 591 to 610 are compositionally biased toward low complexity; it reads GCSACKDSGSSKSDAAASSA. The region spanning 622–727 is the tRNA-binding domain; it reads FSKKIALKTA…PWAAPGTPVI (106 aa).

It belongs to the class-I aminoacyl-tRNA synthetase family. MetG type 1 subfamily. Homodimer. Zn(2+) is required as a cofactor.

It localises to the cytoplasm. It carries out the reaction tRNA(Met) + L-methionine + ATP = L-methionyl-tRNA(Met) + AMP + diphosphate. Is required not only for elongation of protein synthesis but also for the initiation of all mRNA translation through initiator tRNA(fMet) aminoacylation. The chain is Methionine--tRNA ligase from Treponema denticola (strain ATCC 35405 / DSM 14222 / CIP 103919 / JCM 8153 / KCTC 15104).